Reading from the N-terminus, the 118-residue chain is SPbeta prophage-derived uncharacterized protein YolB (118 aa).

In Bacillus subtilis (strain 168), this protein is SPbeta prophage-derived uncharacterized protein YolB (yolB).